The chain runs to 688 residues: DNA ligase (688 aa).

NAD(+) contacts are provided by residues 51–55 (DSEYD), 100–101 (SL), and Glu129. The active-site N6-AMP-lysine intermediate is the Lys131. Arg152, Glu189, Lys308, and Lys332 together coordinate NAD(+). Zn(2+)-binding residues include Cys426, Cys429, Cys444, and Cys450. The BRCT domain maps to 609-688 (ADEQPLKGQT…DELLALLANS (80 aa)).

This sequence belongs to the NAD-dependent DNA ligase family. LigA subfamily. Mg(2+) serves as cofactor. The cofactor is Mn(2+).

It catalyses the reaction NAD(+) + (deoxyribonucleotide)n-3'-hydroxyl + 5'-phospho-(deoxyribonucleotide)m = (deoxyribonucleotide)n+m + AMP + beta-nicotinamide D-nucleotide.. Its function is as follows. DNA ligase that catalyzes the formation of phosphodiester linkages between 5'-phosphoryl and 3'-hydroxyl groups in double-stranded DNA using NAD as a coenzyme and as the energy source for the reaction. It is essential for DNA replication and repair of damaged DNA. In Shewanella sp. (strain MR-4), this protein is DNA ligase.